A 740-amino-acid polypeptide reads, in one-letter code: NAD(P)H-quinone oxidoreductase subunit 5, chloroplastic (740 aa).

16 helical membrane passes run 9–29 (WIIP…LLLI), 39–59 (IWAF…TKLA), 89–109 (IDPL…MVLI), 125–145 (FAYM…PNLI), 147–167 (IHIF…FWFT), 185–205 (GDFG…SFEF), 231–251 (AFLL…HVWL), 259–279 (TPIS…FLVA), 281–301 (LLPL…IGLI), 328–348 (LGYI…FHLI), 355–375 (ALLF…VGYS), 397–417 (TTFF…CFWS), 426–446 (WLYS…TAFY), 548–568 (TMLF…CIGI), 607–627 (FYSV…YGSV), and 719–739 (GRIS…LLLV).

It belongs to the complex I subunit 5 family. As to quaternary structure, NDH is composed of at least 16 different subunits, 5 of which are encoded in the nucleus.

It is found in the plastid. Its subcellular location is the chloroplast thylakoid membrane. The catalysed reaction is a plastoquinone + NADH + (n+1) H(+)(in) = a plastoquinol + NAD(+) + n H(+)(out). It catalyses the reaction a plastoquinone + NADPH + (n+1) H(+)(in) = a plastoquinol + NADP(+) + n H(+)(out). Functionally, NDH shuttles electrons from NAD(P)H:plastoquinone, via FMN and iron-sulfur (Fe-S) centers, to quinones in the photosynthetic chain and possibly in a chloroplast respiratory chain. The immediate electron acceptor for the enzyme in this species is believed to be plastoquinone. Couples the redox reaction to proton translocation, and thus conserves the redox energy in a proton gradient. The chain is NAD(P)H-quinone oxidoreductase subunit 5, chloroplastic (ndhF) from Nuphar advena (Common spatterdock).